Here is a 237-residue protein sequence, read N- to C-terminus: MAKIIISLILLLSLFSFSYGAYNCNKLNCSSKNTKCRTFSCTSVVGCYYTDKCTSPDLCHNSACNASTGNCTLTTISCNDNNPCTDDFCHPGYGCYSVPNSCDPGVICQQNCNDNDPCTYDFCDALNICRHSETYCNDGDACTLNTCGVNGCNFTKISCDDNDPCTADYCSTLYGCYHEPIECSIKVPCNIDSDCNRNNGCETFTCNLSTNTCDYYAKNCGGWPCINNQCTTGSISN.

An N-terminal signal peptide occupies residues 1 to 20 (MAKIIISLILLLSLFSFSYG). Residues Asn-28, Asn-65, and Asn-70 are each glycosylated (N-linked (GlcNAc...) asparagine). Cys-rich CT repeat units follow at residues 57 to 81 (DLCH…CNDN), 82 to 105 (NPCT…CDPG), 116 to 139 (DPCT…CNDG), 140 to 162 (DACT…CDDN), and 163 to 186 (DPCT…CSIK). N-linked (GlcNAc...) asparagine glycosylation is present at Asn-153. Residue Asn-207 is glycosylated (N-linked (GlcNAc...) asparagine).

In terms of biological role, PDI acts by binding stoichiometrically to cyclic nucleotide phosphodiesterase, changing the KM of the enzyme for cAMP from 10 uM to 2 mM. The sequence is that of Cyclic nucleotide phosphodiesterase inhibitor (pdiA) from Dictyostelium discoideum (Social amoeba).